A 218-amino-acid chain; its full sequence is MSMTLGYWDIRGLAHAIRLLLEYTDSSYEEKKYTMGDAPDYDRSQWLNEKFKLGLDFPNLPYLIDGAHKITQSNAILCYIARKHNLCGETEEEKIRVDILENQAMDVSNQLARVCYSPDFEKLKPEYLEELPTMMQHFSQFLGKRPWFVGDKITFVDFLAYDVLDLHRIFEPNCLDAFPNLKDFISRFEGLEKISAYMKSSRFLPKPLYTRVAVWGNK.

Residues 2–88 (SMTLGYWDIR…YIARKHNLCG (87 aa)) enclose the GST N-terminal domain. Glutathione is bound by residues 7–8 (YW), 46–50 (WLNEK), 59–60 (NL), and 72–73 (QS). Positions 90–208 (TEEEKIRVDI…KSSRFLPKPL (119 aa)) constitute a GST C-terminal domain. Tyr-116 provides a ligand contact to substrate.

This sequence belongs to the GST superfamily. Mu family. Homodimer. In terms of tissue distribution, expressed in a wide variety of tissues.

It is found in the cytoplasm. It catalyses the reaction RX + glutathione = an S-substituted glutathione + a halide anion + H(+). The catalysed reaction is 1-chloro-2,4-dinitrobenzene + glutathione = 2,4-dinitrophenyl-S-glutathione + chloride + H(+). It carries out the reaction (13S,14S)-epoxy-(4Z,7Z,9E,11E,16Z,19Z)-docosahexaenoate + glutathione = (13R)-S-glutathionyl-(14S)-hydroxy-(4Z,7Z,9E,11E,16Z,19Z)-docosahexaenoate. The enzyme catalyses leukotriene C4 = leukotriene A4 + glutathione. Its function is as follows. Conjugation of reduced glutathione to a wide number of exogenous and endogenous hydrophobic electrophiles. Catalyzes the conjugation of leukotriene A4 with reduced glutathione (GSH) to form leukotriene C4. Can also catalyze the transfer of a glutathionyl group from glutathione (GSH) to 13(S),14(S)-epoxy-docosahexaenoic acid to form maresin conjugate in tissue regeneration 1 (MCTR1), a bioactive lipid mediator that possess potent anti-inflammatory and proresolving actions. The sequence is that of Glutathione S-transferase Mu 4 (GSTM4) from Homo sapiens (Human).